The following is a 498-amino-acid chain: Lysine--tRNA ligase (498 aa).

Mg(2+) is bound by residues E407 and E414.

The protein belongs to the class-II aminoacyl-tRNA synthetase family. Homodimer. Requires Mg(2+) as cofactor.

It localises to the cytoplasm. It catalyses the reaction tRNA(Lys) + L-lysine + ATP = L-lysyl-tRNA(Lys) + AMP + diphosphate. This chain is Lysine--tRNA ligase, found in Sinorhizobium medicae (strain WSM419) (Ensifer medicae).